The chain runs to 394 residues: Elongation factor Tu 1 (394 aa).

The 195-residue stretch at 10 to 204 (KPHVNVGTIG…YLDSYIPEPE (195 aa)) folds into the tr-type G domain. Residues 19–26 (GHVDHGKT) form a G1 region. Residue 19–26 (GHVDHGKT) coordinates GTP. Threonine 26 is a Mg(2+) binding site. Positions 60–64 (GITIN) are G2. A G3 region spans residues 81–84 (DCPG). GTP contacts are provided by residues 81–85 (DCPGH) and 136–139 (NKCD). The G4 stretch occupies residues 136–139 (NKCD). The G5 stretch occupies residues 174–176 (SAL).

This sequence belongs to the TRAFAC class translation factor GTPase superfamily. Classic translation factor GTPase family. EF-Tu/EF-1A subfamily. Monomer.

The protein resides in the cytoplasm. The catalysed reaction is GTP + H2O = GDP + phosphate + H(+). Functionally, GTP hydrolase that promotes the GTP-dependent binding of aminoacyl-tRNA to the A-site of ribosomes during protein biosynthesis. The sequence is that of Elongation factor Tu 1 from Serratia proteamaculans (strain 568).